The chain runs to 401 residues: MKTLKDLGDLKGKRVLVRADFNVPLDGTTITDDGRIKAALPTIKTLREEGAKVILMAHLGRPKGKVVPELSLAPVAARLGELLGTNVPLAKDTYGEDAQAKVAAMNDGDVVLLENVRFNPEETSKDADERAAYAKKIAALGEAFVSDGFGVVHRAQGSNYDVAADLPAAAGLLVEKEVKALSKATENPERPFTVVLGGSKVSDKLGVIENLLDKANRLVIGGGMVFTFLKAKGYEVGTSLLEEDQLEKVKGYIETAEKNGVELVLPTDVVVNAGFPAGDTPVAPEVVAADAIPADKMGLDIGPESQKLFHDKIVDSKTVVWNGPMGVFEVPEFAAGTKAVAQGLVDATAAGAFTIVGGGDSASAVRNLGFPEDGFSHISTGGGASLEFLEGKELPGLKVLE.

Residues 20–22, Arg-35, 58–61, Arg-117, and Arg-154 contribute to the substrate site; these read DFN and HLGR. ATP-binding positions include Lys-204, Gly-298, Glu-329, and 358 to 361; that span reads GGDS.

It belongs to the phosphoglycerate kinase family. As to quaternary structure, monomer.

Its subcellular location is the cytoplasm. It carries out the reaction (2R)-3-phosphoglycerate + ATP = (2R)-3-phospho-glyceroyl phosphate + ADP. Its pathway is carbohydrate degradation; glycolysis; pyruvate from D-glyceraldehyde 3-phosphate: step 2/5. This chain is Phosphoglycerate kinase, found in Bifidobacterium longum subsp. infantis (strain ATCC 15697 / DSM 20088 / JCM 1222 / NCTC 11817 / S12).